A 421-amino-acid polypeptide reads, in one-letter code: Serine hydroxymethyltransferase (421 aa).

(6S)-5,6,7,8-tetrahydrofolate contacts are provided by residues Leu121 and 125–127; that span reads GHL. N6-(pyridoxal phosphate)lysine is present on Lys230.

This sequence belongs to the SHMT family. Homodimer. Requires pyridoxal 5'-phosphate as cofactor.

The protein resides in the cytoplasm. It catalyses the reaction (6R)-5,10-methylene-5,6,7,8-tetrahydrofolate + glycine + H2O = (6S)-5,6,7,8-tetrahydrofolate + L-serine. The protein operates within one-carbon metabolism; tetrahydrofolate interconversion. It participates in amino-acid biosynthesis; glycine biosynthesis; glycine from L-serine: step 1/1. Its function is as follows. Catalyzes the reversible interconversion of serine and glycine with tetrahydrofolate (THF) serving as the one-carbon carrier. This reaction serves as the major source of one-carbon groups required for the biosynthesis of purines, thymidylate, methionine, and other important biomolecules. Also exhibits THF-independent aldolase activity toward beta-hydroxyamino acids, producing glycine and aldehydes, via a retro-aldol mechanism. This chain is Serine hydroxymethyltransferase, found in Carboxydothermus hydrogenoformans (strain ATCC BAA-161 / DSM 6008 / Z-2901).